A 161-amino-acid polypeptide reads, in one-letter code: Nucleotide-binding protein Sama_2557 (161 aa).

Belongs to the YajQ family.

In terms of biological role, nucleotide-binding protein. The protein is Nucleotide-binding protein Sama_2557 of Shewanella amazonensis (strain ATCC BAA-1098 / SB2B).